Reading from the N-terminus, the 177-residue chain is MRILPVVAAVTAAFLVVACSSPTPPKGVTVVNNFDAKRYLGTWYEIARFDHRFERGLDKVTATYSLRDDGGINVINKGYNPDREMWQKTEGKAYFTGDPSTAALKVSFFGPFYGGYNVIALDREYRHALVCGPDRDYLWILSRTPTISDEMKQQMLAIATREGFEVNKLIWVKQPGA.

Residues 1–18 form the signal peptide; sequence MRILPVVAAVTAAFLVVA. Cys19 is lipidated: N-palmitoyl cysteine. The S-diacylglycerol cysteine moiety is linked to residue Cys19.

It belongs to the calycin superfamily. Lipocalin family. Homodimer.

Its subcellular location is the cell outer membrane. Its function is as follows. Involved in the storage or transport of lipids necessary for membrane maintenance under stressful conditions. Displays a binding preference for lysophospholipids. This chain is Outer membrane lipoprotein Blc, found in Citrobacter freundii.